Here is an 821-residue protein sequence, read N- to C-terminus: KN motif and ankyrin repeat domain-containing protein 3 (821 aa).

A compositionally biased stretch (polar residues) spans 1 to 10 (MAKFALNQNL). Disordered stretches follow at residues 1 to 36 (MAKF…PYSV), 58 to 184 (GPAA…AQLQ), 224 to 333 (LLAG…APET), and 385 to 547 (AAEE…GRCE). Low complexity predominate over residues 77–88 (RPGLAGARSPGA). Positions 128–150 (PRVEHTLRETSRRLELAQTHERA) are enriched in basic and acidic residues. Positions 151-181 (PSPGRGVPRSPRGSGRSSPAPNLAPASPGPA) are enriched in low complexity. 6 positions are modified to phosphoserine: S152, S160, S164, S167, S168, and S177. Residues 181-230 (AQLQLVREQMAAALRRLRELEDQARTLPELQEQVRALRAEKARLLAGRAQ) adopt a coiled-coil conformation. The segment covering 237-261 (AETRPDKLAQLRRLTERLATSERGG) has biased composition (basic and acidic residues). Phosphoserine is present on residues S271, S280, and S293. Residues 367–404 (GVSELLRGRLRELEEAREAAEEAAAGARAQLREATTQT) are a coiled coil. Composition is skewed to low complexity over residues 388-400 (EAAA…LREA) and 494-507 (NGGA…SGSG). ANK repeat units lie at residues 622 to 652 (NGNT…EVNR), 656 to 690 (AGYS…DVNA), 695 to 724 (TGQT…DVNA), 728 to 758 (DGAT…DPAI), and 762 to 785 (EGTS…LHAH). Residues 784-821 (AHLSSGQPDTQSESPPGSQTATPGEGECGDNGENPQVQ) form a disordered region. A compositionally biased stretch (polar residues) spans 787 to 805 (SSGQPDTQSESPPGSQTAT).

In terms of tissue distribution, strongly expressed in breast, liver, lung, skeletal muscle and kidney.

Its function is as follows. May be involved in the control of cytoskeleton formation by regulating actin polymerization. The polypeptide is KN motif and ankyrin repeat domain-containing protein 3 (Homo sapiens (Human)).